The chain runs to 195 residues: Probable nicotinate-nucleotide adenylyltransferase (195 aa).

It belongs to the NadD family.

It catalyses the reaction nicotinate beta-D-ribonucleotide + ATP + H(+) = deamido-NAD(+) + diphosphate. The protein operates within cofactor biosynthesis; NAD(+) biosynthesis; deamido-NAD(+) from nicotinate D-ribonucleotide: step 1/1. Catalyzes the reversible adenylation of nicotinate mononucleotide (NaMN) to nicotinic acid adenine dinucleotide (NaAD). This is Probable nicotinate-nucleotide adenylyltransferase from Opitutus terrae (strain DSM 11246 / JCM 15787 / PB90-1).